We begin with the raw amino-acid sequence, 300 residues long: Secreted mono- and diacylglycerol lipase LIP4 (300 aa).

The signal sequence occupies residues Met-1–Cys-16. Cys-54 and Cys-293 are disulfide-bonded. Ser-167 functions as the Nucleophile in the catalytic mechanism. Asp-224 is an active-site residue.

Belongs to the AB hydrolase superfamily. Lipase family. Class 3 subfamily.

The protein localises to the secreted. The catalysed reaction is a monoacylglycerol + H2O = glycerol + a fatty acid + H(+). It catalyses the reaction a diacylglycerol + H2O = a monoacylglycerol + a fatty acid + H(+). Functionally, secreted lipase involved in Dandruff and seborrheic dermatitis (D/SD) probably via lipase-mediated breakdown of sebaceous lipids and release of irritating free fatty acids. Shows activity against monoglyceride and diglyceride substrates. Due to an absence of fatty acid synthase genes in Malassezia species, secretory lipases are essential for the yeast to generate free fatty acids from degradation of sebum and assimilate them as lipid sources for growth. Plays an essential role at the pathogen-host interface during disease progression. The sequence is that of Secreted mono- and diacylglycerol lipase LIP4 from Malassezia restricta (Seborrheic dermatitis infection agent).